Consider the following 432-residue polypeptide: Carbohydrate esterase MZ0003 (432 aa).

The signal sequence occupies residues 1–25 (MQRTCVLIVLIVTSTMWTPDPDVYA). Residues 266–271 (GHSRLG) carry the GXSYXG catalytic site motif motif. Serine 268 serves as the catalytic Nucleophile. Substrate is bound by residues lysine 272 and tryptophan 359. Residue histidine 409 is the Charge relay system of the active site.

The protein belongs to the carbohydrate esterase 15 (CE15) family. Requires Does not require metal ions for activity. as cofactor.

It is found in the periplasm. Its activity is regulated as follows. Is inhibited by PMSF and by NaF in vitro, which is consistent with the catalytic nucleophile being a serine. Functionally, displays some glucuronoyl esterase activity in vitro, since it is able to hydrolyze methyl 4-O-methyl-D-glucopyranosyluronate, allyl D-glucuronate, benzyl D-glucuronate and D-glucuronic acid methyl ester. However, esters of glucuronic acid are probably not its biological substrate, as they are not present in the marine environment. Can also hydrolyze a range of other esters, including p-nitrophenyl acetate. More likely biologically-relevant substrates for MZ0003 and other marine bacterial CE15s are algal cell wall polysaccharides, as these would be readily available in this environment and could be used as energy sources. The polypeptide is Carbohydrate esterase MZ0003 (Unknown prokaryotic organism).